The chain runs to 380 residues: Cytochrome b (380 aa).

Transmembrane regions (helical) follow at residues 33 to 53, 77 to 98, 113 to 133, and 178 to 198; these read FGSL…FLAM, WLIR…FIHV, WNIG…GYVL, and FFAF…VHLL. Heme b-binding residues include histidine 83 and histidine 97. The heme b site is built by histidine 182 and histidine 196. A ubiquinone is bound at residue histidine 201. Transmembrane regions (helical) follow at residues 226 to 246, 288 to 308, 320 to 340, and 347 to 367; these read IKDL…VLFF, LGGV…PLLN, LTQF…WIGG, and FTTI…VLMP.

Belongs to the cytochrome b family. In terms of assembly, the cytochrome bc1 complex contains 11 subunits: 3 respiratory subunits (MT-CYB, CYC1 and UQCRFS1), 2 core proteins (UQCRC1 and UQCRC2) and 6 low-molecular weight proteins (UQCRH/QCR6, UQCRB/QCR7, UQCRQ/QCR8, UQCR10/QCR9, UQCR11/QCR10 and a cleavage product of UQCRFS1). This cytochrome bc1 complex then forms a dimer. The cofactor is heme b.

The protein resides in the mitochondrion inner membrane. In terms of biological role, component of the ubiquinol-cytochrome c reductase complex (complex III or cytochrome b-c1 complex) that is part of the mitochondrial respiratory chain. The b-c1 complex mediates electron transfer from ubiquinol to cytochrome c. Contributes to the generation of a proton gradient across the mitochondrial membrane that is then used for ATP synthesis. This Thomasomys notatus (Distinguished oldfield mouse) protein is Cytochrome b (MT-CYB).